Reading from the N-terminus, the 410-residue chain is 3-phenylpropionate/cinnamic acid dioxygenase ferredoxin--NAD(+) reductase component (410 aa).

5 to 36 serves as a coordination point for FAD; the sequence is TIIIVGGGQAAAMAAASLRQQGFTGELHLFSD. 146–184 is an NAD(+) binding site; sequence SVVIVGAGTIGLELAASATQRSAAQRSAAQRRCKVTVIE.

Belongs to the bacterial ring-hydroxylating dioxygenase ferredoxin reductase family. This dioxygenase system consists of four proteins: the two subunits of the hydroxylase component (HcaE and HcaF), a ferredoxin (HcaC) and a ferredoxin reductase (HcaD). The cofactor is FAD.

The enzyme catalyses 2 reduced [2Fe-2S]-[ferredoxin] + NAD(+) + H(+) = 2 oxidized [2Fe-2S]-[ferredoxin] + NADH. The protein operates within aromatic compound metabolism; 3-phenylpropanoate degradation. Part of the multicomponent 3-phenylpropionate dioxygenase, that converts 3-phenylpropionic acid (PP) and cinnamic acid (CI) into 3-phenylpropionate-dihydrodiol (PP-dihydrodiol) and cinnamic acid-dihydrodiol (CI-dihydrodiol), respectively. The chain is 3-phenylpropionate/cinnamic acid dioxygenase ferredoxin--NAD(+) reductase component from Shigella flexneri serotype 5b (strain 8401).